The following is a 364-amino-acid chain: Protein Wnt-16 (364 aa).

The signal sequence occupies residues 1-29 (MDRAALLALPSLCALWAAVLSLLPCGTQG). 3 disulfide bridges follow: cysteine 81–cysteine 92, cysteine 138–cysteine 146, and cysteine 148–cysteine 167. Residue asparagine 142 is glycosylated (N-linked (GlcNAc...) asparagine). N-linked (GlcNAc...) asparagine glycosylation occurs at asparagine 188. 8 cysteine pairs are disulfide-bonded: cysteine 220–cysteine 234, cysteine 222–cysteine 229, cysteine 293–cysteine 324, cysteine 309–cysteine 319, cysteine 323–cysteine 363, cysteine 339–cysteine 354, cysteine 341–cysteine 351, and cysteine 346–cysteine 347. A lipid anchor (O-palmitoleoyl serine; by PORCN) is attached at serine 226. N-linked (GlcNAc...) asparagine glycosylation is present at asparagine 310.

Belongs to the Wnt family. Post-translationally, palmitoleoylation is required for efficient binding to frizzled receptors. Depalmitoleoylation leads to Wnt signaling pathway inhibition.

Its subcellular location is the secreted. The protein localises to the extracellular space. The protein resides in the extracellular matrix. Ligand for members of the frizzled family of seven transmembrane receptors. Probable developmental protein. May be a signaling molecule which affects the development of discrete regions of tissues. Is likely to signal over only few cell diameters. In Mus musculus (Mouse), this protein is Protein Wnt-16 (Wnt16).